The sequence spans 221 residues: 2-amino-5-formylamino-6-ribosylaminopyrimidin-4(3H)-one 5'-monophosphate deformylase (221 aa).

Residues Glu-29, His-31, Asp-40, and His-108 each coordinate Fe cation.

The protein belongs to the creatininase superfamily. FAPy deformylase family. As to quaternary structure, homodimer. It depends on Fe(2+) as a cofactor. Zn(2+) serves as cofactor.

It carries out the reaction 2-amino-5-formylamino-6-(5-phospho-D-ribosylamino)pyrimidin-4(3H)-one + H2O = 2,5-diamino-6-(1-D-ribosylamino)pyrimidin-4(3H)-one 5'-phosphate + formate + H(+). It participates in cofactor biosynthesis; coenzyme F420 biosynthesis. Its pathway is cofactor biosynthesis; riboflavin biosynthesis. Functionally, catalyzes the hydrolysis of the formamide of 2-amino-5-formylamino-6-ribosylamino-4(3H)-pyrimidinone 5'-monophosphate (FAPy) to form 2,5-diamino-6-ribosylamino-4(3H)-pyrimidinone 5'-phosphate (APy). This Methanococcus maripaludis (strain C7 / ATCC BAA-1331) protein is 2-amino-5-formylamino-6-ribosylaminopyrimidin-4(3H)-one 5'-monophosphate deformylase.